The chain runs to 335 residues: 2-acylglycerol O-acyltransferase 1 (335 aa).

2 consecutive transmembrane segments (helical) span residues Trp-24–Leu-44 and Val-47–Ala-67. N-linked (GlcNAc...) asparagine glycans are attached at residues Asn-125 and Asn-180.

Belongs to the diacylglycerol acyltransferase family.

Its subcellular location is the endoplasmic reticulum membrane. The catalysed reaction is a 2-acylglycerol + an acyl-CoA = a 1,2-diacylglycerol + CoA. It carries out the reaction a 2-acylglycerol + an acyl-CoA = a 1,2-diacyl-sn-glycerol + CoA. It catalyses the reaction a 2-acylglycerol + an acyl-CoA = a 2,3-diacyl-sn-glycerol + CoA. The enzyme catalyses a 1-acylglycerol + an acyl-CoA = a 1,2-diacylglycerol + CoA. The catalysed reaction is a 1-acylglycerol + an acyl-CoA = a 1,3-diacylglycerol + CoA. It carries out the reaction a 1-acyl-sn-glycerol + an acyl-CoA = a 1,3-diacyl-sn-glycerol + CoA. It catalyses the reaction a 3-acyl-sn-glycerol + an acyl-CoA = a 1,3-diacyl-sn-glycerol + CoA. It functions in the pathway glycerolipid metabolism; triacylglycerol biosynthesis. Functionally, involved in glycerolipid synthesis and lipid metabolism. Catalyzes the formation of diacylglycerol, the precursor of triacylglycerol, by transferring the acyl chain of a fatty acyl-CoA to a monoacylglycerol, mainly at the sn-1 or sn-3 positions. It uses both sn-2-monoacylglycerol (2-acylglycerol) and sn-1-monoacylglycerol (1-acyl-sn-glycerol) equally well as substrates, and uses sn-3-monoacylglycerol (3-acyl-sn-glycerol) with lower efficiency. In Xenopus laevis (African clawed frog), this protein is 2-acylglycerol O-acyltransferase 1 (mogat1).